We begin with the raw amino-acid sequence, 2120 residues long: Separin (2120 aa).

A Phosphoserine modification is found at serine 1126. The tract at residues 1299-1355 is disordered; that stretch reads IKSVPGSEPSKTQGQKRSGRGRQKLASAPLRLNNTSQKGLEGRGLPCTPKPPDRIRQ. Serine 1396 and serine 1399 each carry phosphoserine. 2 disordered regions span residues 1412 to 1485 and 1507 to 1561; these read AEEP…PEIM and GSDG…PRLR. Basic residues-rich tracts occupy residues 1418 to 1432 and 1454 to 1463; these read RGTA…RKGL and RSRRAKKVAS. Residues 1464-1473 are compositionally biased toward basic and acidic residues; it reads RHCEERRPQR. Serine 1508 carries the post-translational modification Phosphoserine. Over residues 1548–1558 the composition is skewed to basic and acidic residues; the sequence is PDKESDKDLGP. Residues 1945-2040 enclose the Peptidase C50 domain; that stretch reads PRSTFYVLNP…SAALAVRGNL (96 aa). Residue cysteine 2029 is part of the active site.

In terms of assembly, interacts with PTTG1. Interacts with RAD21. In terms of processing, autocleaves. This function, which is not essential for its protease activity, is unknown. Post-translationally, phosphorylated by CDK1. There are 8 Ser/Thr phosphorylation sites. Among them, Ser-1126 phosphorylation is the major site, which conducts to the enzyme inactivation.

It localises to the cytoplasm. Its subcellular location is the nucleus. It carries out the reaction All bonds known to be hydrolyzed by this endopeptidase have arginine in P1 and an acidic residue in P4. P6 is often occupied by an acidic residue or by a hydroxy-amino-acid residue, the phosphorylation of which enhances cleavage.. Regulated by at least two independent mechanisms. First, it is inactivated via its interaction with securin/PTTG1, which probably covers its active site. The association with PTTG1 is not only inhibitory, since PTTG1 is also required for activating it, the enzyme being inactive in cells in which PTTG1 is absent. PTTG1 degradation at anaphase, liberates it and triggers RAD21 cleavage. Second, phosphorylation at Ser-1126 inactivates it. The complete phosphorylation during mitosis, is removed when cells undergo anaphase. Activation of the enzyme at the metaphase-anaphase transition probably requires the removal of both securin and inhibitory phosphate. Functionally, caspase-like protease, which plays a central role in the chromosome segregation by cleaving the SCC1/RAD21 subunit of the cohesin complex at the onset of anaphase. During most of the cell cycle, it is inactivated by different mechanisms. This is Separin (ESPL1) from Homo sapiens (Human).